The primary structure comprises 450 residues: Phosphoglucosamine mutase (450 aa).

The active-site Phosphoserine intermediate is the serine 101. Residues serine 101, aspartate 240, aspartate 242, and aspartate 244 each contribute to the Mg(2+) site. Residue serine 101 is modified to Phosphoserine.

The protein belongs to the phosphohexose mutase family. Requires Mg(2+) as cofactor. In terms of processing, activated by phosphorylation.

It catalyses the reaction alpha-D-glucosamine 1-phosphate = D-glucosamine 6-phosphate. In terms of biological role, catalyzes the conversion of glucosamine-6-phosphate to glucosamine-1-phosphate. This Streptococcus thermophilus (strain CNRZ 1066) protein is Phosphoglucosamine mutase.